The chain runs to 431 residues: Enolase (431 aa).

(2R)-2-phosphoglycerate is bound at residue Gln-167. The active-site Proton donor is Glu-209. Residues Asp-246, Glu-289, and Asp-316 each coordinate Mg(2+). Positions 341, 370, 371, and 392 each coordinate (2R)-2-phosphoglycerate. The active-site Proton acceptor is the Lys-341.

Belongs to the enolase family. As to quaternary structure, component of the RNA degradosome, a multiprotein complex involved in RNA processing and mRNA degradation. It depends on Mg(2+) as a cofactor.

The protein localises to the cytoplasm. It localises to the secreted. It is found in the cell surface. The enzyme catalyses (2R)-2-phosphoglycerate = phosphoenolpyruvate + H2O. It functions in the pathway carbohydrate degradation; glycolysis; pyruvate from D-glyceraldehyde 3-phosphate: step 4/5. Catalyzes the reversible conversion of 2-phosphoglycerate (2-PG) into phosphoenolpyruvate (PEP). It is essential for the degradation of carbohydrates via glycolysis. The chain is Enolase from Marinobacter nauticus (strain ATCC 700491 / DSM 11845 / VT8) (Marinobacter aquaeolei).